The following is a 200-amino-acid chain: Nucleoside triphosphate pyrophosphatase (200 aa).

The active-site Proton acceptor is Asp-79.

Belongs to the Maf family. It depends on a divalent metal cation as a cofactor.

Its subcellular location is the cytoplasm. The enzyme catalyses a ribonucleoside 5'-triphosphate + H2O = a ribonucleoside 5'-phosphate + diphosphate + H(+). It carries out the reaction a 2'-deoxyribonucleoside 5'-triphosphate + H2O = a 2'-deoxyribonucleoside 5'-phosphate + diphosphate + H(+). Nucleoside triphosphate pyrophosphatase. May have a dual role in cell division arrest and in preventing the incorporation of modified nucleotides into cellular nucleic acids. The chain is Nucleoside triphosphate pyrophosphatase from Legionella pneumophila (strain Paris).